A 475-amino-acid chain; its full sequence is UDP-glycosyltransferase 1 (475 aa).

The active-site Proton acceptor is the His15. His15 is an an anthocyanidin binding site. Residue Asp117 is the Charge relay of the active site. Ala345, Gln347, His362, Trp365, Asn366, Ser367, and Glu370 together coordinate UDP-alpha-D-glucose. Gly385 serves as a coordination point for an anthocyanidin. Residues Glu386 and Gln387 each contribute to the UDP-alpha-D-glucose site.

It belongs to the UDP-glycosyltransferase family. In terms of tissue distribution, mostly expressed in leaves and flowers, and, to a lower extent, in roots and stems.

The enzyme catalyses (20S)-protopanaxadiol + UDP-alpha-D-glucose = (20S)-ginsenoside C-K + UDP + H(+). The catalysed reaction is (20S)-ginsenoside Rg3 + UDP-alpha-D-glucose = (20S)-ginsenoside Rd + UDP + H(+). It catalyses the reaction (20S)-ginsenoside Rh2 + UDP-alpha-D-glucose = (20S)-ginsenoside F2 + UDP + H(+). It carries out the reaction (20S)-protopanaxatriol + UDP-alpha-D-glucose = (20S)-ginsenoside F1 + UDP + H(+). The enzyme catalyses dammarenediol-II + UDP-alpha-D-glucose = (20S)-20-O-(beta-D-glucosyl)-3-hydroxydammarene + UDP + H(+). It participates in secondary metabolite biosynthesis; terpenoid biosynthesis. In terms of biological role, component of the dammarane-type triterpene saponins (e.g. ginsenosides or panaxosides) biosynthetic pathway. Glycosyltransferase that catalyzes the biosynthesis of ginsenoside F1 from protopanaxatriol (PPT). Triggers C20-OH glycosylation of ginsenoside Rg3 to produce ginsenoside Rd. Mediates the conversion of protopanaxadiol (PPD) to the ginsenoside compound K. catalyzes the production of 20S-O-beta-(D-glucosyl)-dammarenediol II form dammarenediol II (DM). This Panax ginseng (Korean ginseng) protein is UDP-glycosyltransferase 1.